Consider the following 483-residue polypeptide: UDP-N-acetylmuramate--L-alanine ligase (483 aa).

ATP is bound at residue 112 to 118; that stretch reads GTHGKTT.

It belongs to the MurCDEF family.

Its subcellular location is the cytoplasm. The enzyme catalyses UDP-N-acetyl-alpha-D-muramate + L-alanine + ATP = UDP-N-acetyl-alpha-D-muramoyl-L-alanine + ADP + phosphate + H(+). It functions in the pathway cell wall biogenesis; peptidoglycan biosynthesis. Functionally, cell wall formation. The chain is UDP-N-acetylmuramate--L-alanine ligase from Ralstonia nicotianae (strain ATCC BAA-1114 / GMI1000) (Ralstonia solanacearum).